The chain runs to 424 residues: Serine--tRNA ligase (424 aa).

233–235 serves as a coordination point for L-serine; it reads TAE. An ATP-binding site is contributed by 264–266; that stretch reads RKE. Position 287 (Glu287) interacts with L-serine. Position 351–354 (351–354) interacts with ATP; the sequence is EISS. Ser386 serves as a coordination point for L-serine.

The protein belongs to the class-II aminoacyl-tRNA synthetase family. Type-1 seryl-tRNA synthetase subfamily. In terms of assembly, homodimer. The tRNA molecule binds across the dimer.

The protein localises to the cytoplasm. The enzyme catalyses tRNA(Ser) + L-serine + ATP = L-seryl-tRNA(Ser) + AMP + diphosphate + H(+). It carries out the reaction tRNA(Sec) + L-serine + ATP = L-seryl-tRNA(Sec) + AMP + diphosphate + H(+). It functions in the pathway aminoacyl-tRNA biosynthesis; selenocysteinyl-tRNA(Sec) biosynthesis; L-seryl-tRNA(Sec) from L-serine and tRNA(Sec): step 1/1. Its function is as follows. Catalyzes the attachment of serine to tRNA(Ser). Is also able to aminoacylate tRNA(Sec) with serine, to form the misacylated tRNA L-seryl-tRNA(Sec), which will be further converted into selenocysteinyl-tRNA(Sec). In Elusimicrobium minutum (strain Pei191), this protein is Serine--tRNA ligase.